The sequence spans 556 residues: Dihydroxy-acid dehydratase (556 aa).

Position 81 (D81) interacts with Mg(2+). C122 lines the [2Fe-2S] cluster pocket. Residues D123 and K124 each contribute to the Mg(2+) site. At K124 the chain carries N6-carboxylysine. Position 196 (C196) interacts with [2Fe-2S] cluster. A Mg(2+)-binding site is contributed by E444. S470 serves as the catalytic Proton acceptor.

It belongs to the IlvD/Edd family. Homodimer. [2Fe-2S] cluster serves as cofactor. Mg(2+) is required as a cofactor.

It catalyses the reaction (2R)-2,3-dihydroxy-3-methylbutanoate = 3-methyl-2-oxobutanoate + H2O. The catalysed reaction is (2R,3R)-2,3-dihydroxy-3-methylpentanoate = (S)-3-methyl-2-oxopentanoate + H2O. It functions in the pathway amino-acid biosynthesis; L-isoleucine biosynthesis; L-isoleucine from 2-oxobutanoate: step 3/4. It participates in amino-acid biosynthesis; L-valine biosynthesis; L-valine from pyruvate: step 3/4. Its function is as follows. Functions in the biosynthesis of branched-chain amino acids. Catalyzes the dehydration of (2R,3R)-2,3-dihydroxy-3-methylpentanoate (2,3-dihydroxy-3-methylvalerate) into 2-oxo-3-methylpentanoate (2-oxo-3-methylvalerate) and of (2R)-2,3-dihydroxy-3-methylbutanoate (2,3-dihydroxyisovalerate) into 2-oxo-3-methylbutanoate (2-oxoisovalerate), the penultimate precursor to L-isoleucine and L-valine, respectively. The polypeptide is Dihydroxy-acid dehydratase (Syntrophotalea carbinolica (strain DSM 2380 / NBRC 103641 / GraBd1) (Pelobacter carbinolicus)).